Here is a 229-residue protein sequence, read N- to C-terminus: Large ribosomal subunit protein uL1 (229 aa).

The protein belongs to the universal ribosomal protein uL1 family. In terms of assembly, part of the 50S ribosomal subunit.

Its function is as follows. Binds directly to 23S rRNA. The L1 stalk is quite mobile in the ribosome, and is involved in E site tRNA release. In terms of biological role, protein L1 is also a translational repressor protein, it controls the translation of the L11 operon by binding to its mRNA. In Ureaplasma urealyticum serovar 10 (strain ATCC 33699 / Western), this protein is Large ribosomal subunit protein uL1.